The chain runs to 586 residues: Madf and zinc finger protein 1 (586 aa).

Residues 161-194 form an involved in interaction with Cp190 region; sequence FMSEDDLAPPRKPGRPPRRTRPGQVFKFKVSFIR. The segment at residues 201-292 is a DNA-binding region (MADF 1); that stretch reads HLIQAYKEHP…KCEFLSVAPV (92 aa). Residues 294 to 319 are involved in interaction with Cp190; sequence TPRENEEDNDLTAIKLNFKEENLITT. The MADF 2 DNA-binding region spans 320 to 413; sequence SFIETYANYP…MCSFLPAKGS (94 aa). 6 C2H2-type zinc fingers span residues 418 to 441, 448 to 471, 476 to 498, 504 to 527, 533 to 555, and 561 to 583; these read LYCD…VKAH, YLCS…LRSH, LKCQ…TLIH, HVCD…NGVH, YSCN…IKGH, and KKCE…RRSH.

Interacts (via regions flanking MADF domain 1) with Cp190 (via regions between the BTB domain and first zinc finger domain); the interaction is probably direct and is essential for protein function.

It localises to the nucleus. The protein localises to the chromosome. It is found in the nucleoplasm. Its function is as follows. Chromatin-binding protein involved in the organization of active promoters and insulators. Essential for the activity of heterochromatin promoters; primarily binds to specific motifs within promoters of housekeeping genes. May also associate to a lesser extent with promoters in euchromatin. Mediates recruitment of Cp190, a multifunctional protein involved in the recruitment of transcription complexes, the creation of open chromatin regions and the activity of insulators. Cooperates with pita and su(Hw) to recruit Cp190 and regulate insulator function at the front-ultraabdominal (Fub) boundary. May cooperate with other C2H2 zinc finger proteins, such as M1BP, to recruit CP190 to promoters. May be involved in cellular organization and development of the eye. This is Madf and zinc finger protein 1 from Drosophila melanogaster (Fruit fly).